A 238-amino-acid chain; its full sequence is tRNA (guanine-N(1)-)-methyltransferase (238 aa).

S-adenosyl-L-methionine contacts are provided by residues glycine 112 and 131-136 (LGDFIL).

It belongs to the RNA methyltransferase TrmD family. Homodimer.

The protein resides in the cytoplasm. The catalysed reaction is guanosine(37) in tRNA + S-adenosyl-L-methionine = N(1)-methylguanosine(37) in tRNA + S-adenosyl-L-homocysteine + H(+). Specifically methylates guanosine-37 in various tRNAs. The sequence is that of tRNA (guanine-N(1)-)-methyltransferase from Nostoc punctiforme (strain ATCC 29133 / PCC 73102).